The sequence spans 36 residues: DSDCKDKLPACGEYRGSFCKLEKVKSNCEKTCGVKC.

A ShKT domain is found at Cys4 to Cys36. 3 disulfide bridges follow: Cys4-Cys36, Cys11-Cys28, and Cys19-Cys32.

The protein belongs to the sea anemone type 1 potassium channel toxin family. Type 1b subfamily.

It is found in the secreted. It localises to the nematocyst. Its function is as follows. Has hemolytic activity. Inhibits voltage-gated potassium channels (Kv1/KCNA). The polypeptide is U-metritoxin-Msn1a (Metridium senile (Brown sea anemone)).